The sequence spans 110 residues: Flagellar hook-basal body complex protein FliE (110 aa).

This sequence belongs to the FliE family.

The protein localises to the bacterial flagellum basal body. The polypeptide is Flagellar hook-basal body complex protein FliE (Bordetella petrii (strain ATCC BAA-461 / DSM 12804 / CCUG 43448)).